We begin with the raw amino-acid sequence, 88 residues long: Small ribosomal subunit protein bS16 (88 aa).

The protein belongs to the bacterial ribosomal protein bS16 family.

The protein is Small ribosomal subunit protein bS16 of Geobacter sulfurreducens (strain ATCC 51573 / DSM 12127 / PCA).